The primary structure comprises 167 residues: Telethonin (167 aa).

Serine 39 bears the Phosphoserine mark. Positions 144–167 are disordered; that stretch reads VPVSKPGALRRSLSRSMSQEAQRG. Residues 157-167 show a composition bias toward polar residues; it reads SRSMSQEAQRG.

In terms of assembly, interacts with MYOZ1, MYOZ2 and MYOZ3. Interacts with CSRP3. Interacts directly with the N-terminal Ig-like domains of 2 titin (TTN) molecules. Interacts with ANKRD2; the interaction is direct. Heart and skeletal muscle.

Its subcellular location is the cytoplasm. It localises to the myofibril. The protein resides in the sarcomere. Its function is as follows. Muscle assembly regulating factor. Mediates the antiparallel assembly of titin (TTN) molecules at the sarcomeric Z-disk. The protein is Telethonin (TCAP) of Homo sapiens (Human).